A 1331-amino-acid chain; its full sequence is Serine/threonine-protein kinase SSK22 (1331 aa).

One can recognise a Protein kinase domain in the interval 1034–1310 (WQKRSFIGGG…AVELLIDPWM (277 aa)). ATP-binding positions include 1040 to 1048 (IGGGTFGQV) and Lys1063. Asp1158 (proton acceptor) is an active-site residue.

This sequence belongs to the protein kinase superfamily. STE Ser/Thr protein kinase family. MAP kinase kinase kinase subfamily. Interacts with by SSK1.

The catalysed reaction is L-seryl-[protein] + ATP = O-phospho-L-seryl-[protein] + ADP + H(+). It catalyses the reaction L-threonyl-[protein] + ATP = O-phospho-L-threonyl-[protein] + ADP + H(+). Its function is as follows. Kinase involved in a signal transduction pathway that is activated by changes in the osmolarity of the extracellular environment. Activates the PBS2 MAP kinase kinase by phosphorylation. The sequence is that of Serine/threonine-protein kinase SSK22 (SSK22) from Saccharomyces cerevisiae (strain ATCC 204508 / S288c) (Baker's yeast).